The primary structure comprises 102 residues: Small ribosomal subunit protein uS10 (102 aa).

This sequence belongs to the universal ribosomal protein uS10 family. Part of the 30S ribosomal subunit.

Its function is as follows. Involved in the binding of tRNA to the ribosomes. This chain is Small ribosomal subunit protein uS10, found in Bacillus cereus (strain G9842).